We begin with the raw amino-acid sequence, 335 residues long: Transaldolase (335 aa).

Position 2 is an N-acetylserine (Ser2). Lys144 serves as the catalytic Schiff-base intermediate with substrate.

Belongs to the transaldolase family. Type 1 subfamily. As to quaternary structure, homodimer.

It carries out the reaction D-sedoheptulose 7-phosphate + D-glyceraldehyde 3-phosphate = D-erythrose 4-phosphate + beta-D-fructose 6-phosphate. The protein operates within carbohydrate degradation; pentose phosphate pathway; D-glyceraldehyde 3-phosphate and beta-D-fructose 6-phosphate from D-ribose 5-phosphate and D-xylulose 5-phosphate (non-oxidative stage): step 2/3. Functionally, transaldolase is important for the balance of metabolites in the pentose-phosphate pathway. The chain is Transaldolase (TAL1) from Saccharomyces cerevisiae (strain ATCC 204508 / S288c) (Baker's yeast).